Here is a 217-residue protein sequence, read N- to C-terminus: Frataxin, mitochondrial (217 aa).

The transit peptide at 1–42 directs the protein to the mitochondrion; it reads MWTLGRRSVASFLPRSALPGFAPTRAGAPRPAKDLSLSGLPG.

This sequence belongs to the frataxin family. Component of the mitochondrial core iron-sulfur cluster (ISC) complex composed of NFS1, LYRM4, NDUFAB1, ISCU, FXN, and FDX2; this complex is a heterohexamer containing two copies of each monomer. Homodimer. Monomer (probable predominant form). Oligomer. Monomers and polymeric aggregates of &gt;1 MDa have been isolated from mitochondria. A small fraction of heterologous overexpressed recombinant frataxin forms high-molecular weight aggregates that incorporate iron. Interacts with LYRM4. Interacts (via ferrous form) with ISCU; the interaction is possible when both are bound to the dimeric form of the cysteine desulfurase complex (NFS1:LYRM4) and the interaction enhances FXN interaction to the dimeric form of the cysteine desulfurase complex (NFS1:LYRM4). Interacts with FECH; one iron-bound FXN monomer seems to interact with a FECH homodimer. Interacts with SDHA and SDHB. Interacts with ACO2; the interaction is dependent on citrate. Interacts with HSPA9. As to quaternary structure, interacts with ACO1. Interacts with ISCU (cytoplasmic form). Processed in two steps by mitochondrial processing peptidase (MPP). MPP first cleaves the precursor to intermediate form and subsequently converts the intermediate to yield frataxin mature form (frataxin(81-210)) which is the predominant form. The additional forms, frataxin(56-210) and frataxin(78-210), seem to be produced when the normal maturation process is impaired; their physiological relevance is unsure.

It is found in the mitochondrion. Its subcellular location is the cytoplasm. It localises to the cytosol. The catalysed reaction is 4 Fe(2+) + O2 + 4 H(+) = 4 Fe(3+) + 2 H2O. Functionally, functions as an activator of persulfide transfer to the scaffoding protein ISCU as component of the core iron-sulfur cluster (ISC) assembly complex and participates to the [2Fe-2S] cluster assembly. Accelerates sulfur transfer from NFS1 persulfide intermediate to ISCU and to small thiols such as L-cysteine and glutathione leading to persulfuration of these thiols and ultimately sulfide release. Binds ferrous ion and is released from FXN upon the addition of both L-cysteine and reduced FDX2 during [2Fe-2S] cluster assembly. The core iron-sulfur cluster (ISC) assembly complex is involved in the de novo synthesis of a [2Fe-2S] cluster, the first step of the mitochondrial iron-sulfur protein biogenesis. This process is initiated by the cysteine desulfurase complex (NFS1:LYRM4:NDUFAB1) that produces persulfide which is delivered on the scaffold protein ISCU in a FXN-dependent manner. Then this complex is stabilized by FDX2 which provides reducing equivalents to accomplish the [2Fe-2S] cluster assembly. Finally, the [2Fe-2S] cluster is transferred from ISCU to chaperone proteins, including HSCB, HSPA9 and GLRX5. May play a role in the protection against iron-catalyzed oxidative stress through its ability to catalyze the oxidation of Fe(2+) to Fe(3+); the oligomeric form but not the monomeric form has in vitro ferroxidase activity. May be able to store large amounts of iron in the form of a ferrihydrite mineral by oligomerization; however, the physiological relevance is unsure as reports are conflicting and the function has only been shown using heterologous overexpression systems. May function as an iron chaperone protein that protects the aconitase [4Fe-4S]2+ cluster from disassembly and promotes enzyme reactivation. May play a role as a high affinity iron binding partner for FECH that is capable of both delivering iron to ferrochelatase and mediating the terminal step in mitochondrial heme biosynthesis. Its function is as follows. Modulates the RNA-binding activity of ACO1. May be involved in the cytoplasmic iron-sulfur protein biogenesis. May contribute to oxidative stress resistance and overall cell survival. This Bos taurus (Bovine) protein is Frataxin, mitochondrial.